The following is a 239-amino-acid chain: Ribonuclease 3 (239 aa).

Residues 18–141 enclose the RNase III domain; sequence YLTLEKALGY…LMAGVYLEAG (124 aa). Glu-54 is a binding site for Mg(2+). The active site involves Asp-58. Ser-127 and Glu-130 together coordinate Mg(2+). Glu-130 is a catalytic residue. The DRBM domain occupies 168–237; it reads DYKTALQELT…AYQALQKLKE (70 aa).

Belongs to the ribonuclease III family. Homodimer. Requires Mg(2+) as cofactor.

The protein resides in the cytoplasm. The enzyme catalyses Endonucleolytic cleavage to 5'-phosphomonoester.. Functionally, digests double-stranded RNA. Involved in the processing of primary rRNA transcript to yield the immediate precursors to the large and small rRNAs (23S and 16S). Processes some mRNAs, and tRNAs when they are encoded in the rRNA operon. Processes pre-crRNA and tracrRNA of type II CRISPR loci if present in the organism. The polypeptide is Ribonuclease 3 (Helicobacter pylori (strain J99 / ATCC 700824) (Campylobacter pylori J99)).